The following is a 498-amino-acid chain: MASQGTKRSYEQMETDGERQNATEIRASVGKMVGGIGRFYIQMCTELKLSDYEGRLIQNSLTIERMVLSAFDERRNKYLEEHPSAGKDPKKTGGPIYKRVDGKWMRELILYDKEEIRRIWRQANNGDDATAGLTHIMIWHSNLNDTTYQRTRALVRTGMDPRMCSLMQGSTLPRRSGAAGAAVKGVGTMVMELIRMIKRGINDRNFWRGENGRKTRIAYERMCNILKGKFQTAAQRAMMDQVRESRNPGNAEIEDLIFLARSALILRGSVAHKSCLPACVYGPAVASGYDFEREGYSLVGIDPFKLLQNSHVYSLIRPNENPAHKSQLVWMACNSAAFEDLRLSSFIRGTKVVPRGRLSTRGIQIASNENMDTMESSTLELRSRYWAIRTRSGGNTNQQRASAGQISIQPTFSVQRNLPFDKTTIMAAFTGNAEGRTSDMRAEIIRMMENARPEEVSFQGRGVFELSDERAANPIVPSFDMSNEGSYFFGDNAEEYDN.

Residues 1 to 18 carry the Unconventional nuclear localization signal motif; it reads MASQGTKRSYEQMETDGE. Residues 1–21 are disordered; it reads MASQGTKRSYEQMETDGERQN. The span at 8-21 shows a compositional bias: basic and acidic residues; that stretch reads RSYEQMETDGERQN. Residues 198–216 carry the Bipartite nuclear localization signal motif; that stretch reads KRGINDRNFWRGENGRKTR.

The protein belongs to the influenza viruses nucleoprotein family. Homomultimerizes to form the nucleocapsid. May bind host exportin-1/XPO1. Binds to viral genomic RNA. Protein-RNA contacts are mediated by a combination of electrostatic interactions between positively charged residues and the phosphate backbone and planar interactions between aromatic side chains and bases. Late in virus-infected cells, may be cleaved from a 56-kDa protein to a 53-kDa protein by a cellular caspase. This cleavage might be a marker for the onset of apoptosis in infected cells or have a specific function in virus host interaction.

Its subcellular location is the virion. It localises to the host nucleus. Encapsidates the negative strand viral RNA, protecting it from nucleases. The encapsidated genomic RNA is termed the ribonucleoprotein (RNP) and serves as template for transcription and replication. The RNP needs to be localized in the host nucleus to start an infectious cycle, but is too large to diffuse through the nuclear pore complex. NP comprises at least 2 nuclear localization signals that are responsible for the active RNP import into the nucleus through cellular importin alpha/beta pathway. Later in the infection, nclear export of RNPs are mediated through viral proteins NEP interacting with M1 which binds nucleoproteins. It is possible that nucleoprotein binds directly host exportin-1/XPO1 and plays an active role in RNPs nuclear export. M1 interaction with RNP seems to hide nucleoprotein's nuclear localization signals. Soon after a virion infects a new cell, M1 dissociates from the RNP under acidification of the virion driven by M2 protein. Dissociation of M1 from RNP unmasks nucleoprotein's nuclear localization signals, targeting the RNP to the nucleus. The protein is Nucleoprotein of Aves (Human).